Reading from the N-terminus, the 587-residue chain is 65-kDa microtubule-associated protein 1 (587 aa).

5 coiled-coil regions span residues 46-84 (QECL…TMSL), 151-181 (DESD…LRKV), 234-257 (LTLK…LIDL), 290-317 (ALAR…MKEI), and 461-489 (AMLD…VQEQ). Over residues 474–494 (EEEKRRLREQKKVQEQPHVEQ) the composition is skewed to basic and acidic residues. Residues 474–587 (EEEKRRLREQ…AADHQVPASP (114 aa)) are disordered. At S503 the chain carries Phosphoserine. T526 is modified (phosphothreonine). Positions 531–542 (LSLNANQNGSRS) are enriched in polar residues. S532 and S540 each carry phosphoserine. Residues T543 and T552 each carry the phosphothreonine modification. The segment covering 543 to 553 (TAKEAGRRETL) has biased composition (basic and acidic residues). Phosphoserine occurs at positions 573, 576, and 586.

Belongs to the MAP65/ASE1 family. In terms of assembly, forms dimer. Binds to MT, mostly with coaligned MT, both between parallel or antiparallel, forming thick bundles. Interacts with the alpha-tubulin subunit of the tubulin heterodimer. Bundles polymerized MT via the formation of 25-nm crossbridges at specific stages of the cell cycle (e.g. bundles microtubules in interphase, anaphase and telophase but does not bind microtubules in prophase or metaphase), at the plus-end, the minus-end, or along the entire length of MT, and along phragmoplast MT. Interacts with SH3P1 and MPK4. Post-translationally, basal phosphorylation at all stages of the cell cycle. MT-binding properties inhibited by hyperphosphorylation mediated by CDKs and/or MAPKs (e.g. ANP2, ANP3, MPK4 and MPK6) during prometaphase and metaphase. In terms of tissue distribution, expressed in all organs and tissues with the exception of sepals and anthers. Bound to subsets of microtubules in the cells of root epidermis, hypocotyl and cotyledons (at protein level).

The protein localises to the nucleus. It is found in the cytoplasm. It localises to the cytoskeleton. Its subcellular location is the spindle. The protein resides in the phragmoplast. The protein localises to the cell cortex. Functionally, microtubule-associated protein that bundle and stabilize adjacent microtubules (MT) of the cell cortex. Enhances MT nucleation. Can also bind to tubulin dimers and promotes their polymerization. Confers MT resistance to the drug propyzamide and cold conditions. Plays a role in the central spindle at anaphase to early cytokinesis but is not essential at the midline of the phragmoplast at later stages. Represses metaphase spindle organization and the transition to anaphase in dephosphorylated active form. Promotes the formation of a planar network of antiparallel microtubules. May be involved in stomatal movement modulation by regulating the dynamic and arrangement of cortical MT. In Arabidopsis thaliana (Mouse-ear cress), this protein is 65-kDa microtubule-associated protein 1 (MAP65-1).